The sequence spans 302 residues: Giardin subunit alpha-5 (302 aa).

Annexin repeat units follow at residues 1–72, 74–144, 153–226, and 230–298; these read MTST…VNMW, SRHE…VAGW, GSVE…AAHF, and GLPV…TLWR.

This sequence belongs to the annexin family. Giardin subunit alpha subfamily.

The protein resides in the cytoplasm. It is found in the cytoskeleton. Its function is as follows. Giardins are involved in parasite attachment to the intestinal mucosa and in the cytoskeletal disassembly and reassembly that marks the transition from infectious trophozoite to transmissible cyst. They may interact with other cytoskeletal proteins such as microtubules in the microribbons or crossbridges, to maintain the integrity of the ventral disk. The polypeptide is Giardin subunit alpha-5 (Giardia intestinalis (Giardia lamblia)).